A 100-amino-acid chain; its full sequence is Small ribosomal subunit protein uS14 (100 aa).

Belongs to the universal ribosomal protein uS14 family. In terms of assembly, part of the 30S ribosomal subunit. Contacts proteins S3 and S10.

Binds 16S rRNA, required for the assembly of 30S particles and may also be responsible for determining the conformation of the 16S rRNA at the A site. The protein is Small ribosomal subunit protein uS14 of Synechococcus sp. (strain CC9902).